We begin with the raw amino-acid sequence, 250 residues long: Uracil-DNA glycosylase (250 aa).

Asp91 serves as the catalytic Proton acceptor.

The protein belongs to the uracil-DNA glycosylase (UDG) superfamily. UNG family.

The protein localises to the host nucleus. The catalysed reaction is Hydrolyzes single-stranded DNA or mismatched double-stranded DNA and polynucleotides, releasing free uracil.. Its function is as follows. Excises uracil residues from the DNA which can arise as a result of misincorporation of dUMP residues by DNA polymerase or due to deamination of cytosine. Excises uracil residues from the DNA which can arise as a result of misincorporation of dUMP residues by DNA polymerase or deamination of cytosines. Therefore may reduce deleterious uracil incorporation into the viral genome, particularly in terminally differentiated cells which lack DNA repair enzymes. In Homo sapiens (Human), this protein is Uracil-DNA glycosylase (UL114).